We begin with the raw amino-acid sequence, 605 residues long: Phosphoenolpyruvate carboxykinase [GTP] (605 aa).

Residues R79 and 218 to 220 each bind substrate; that span reads YGG. Positions 227 and 247 each coordinate Mn(2+). Position 269 (S269) interacts with substrate. 270 to 275 provides a ligand contact to GTP; the sequence is ACGKTN. Residue C271 is part of the active site. D294 lines the Mn(2+) pocket. Residues 364-381 show a composition bias toward basic and acidic residues; sequence LTDWKGRDWTPQSDEKAA. A disordered region spans residues 364-385; sequence LTDWKGRDWTPQSDEKAAHPNS. 384-386 lines the substrate pocket; it reads NSR. GTP is bound by residues R386, R417, and 513–516; that span reads FGEN.

It belongs to the phosphoenolpyruvate carboxykinase [GTP] family. In terms of assembly, monomer. The cofactor is Mn(2+).

The protein localises to the cytoplasm. The catalysed reaction is oxaloacetate + GTP = phosphoenolpyruvate + GDP + CO2. It functions in the pathway carbohydrate biosynthesis; gluconeogenesis. Functionally, catalyzes the conversion of oxaloacetate (OAA) to phosphoenolpyruvate (PEP), the rate-limiting step in the metabolic pathway that produces glucose from lactate and other precursors derived from the citric acid cycle. This Saccharopolyspora erythraea (strain ATCC 11635 / DSM 40517 / JCM 4748 / NBRC 13426 / NCIMB 8594 / NRRL 2338) protein is Phosphoenolpyruvate carboxykinase [GTP].